We begin with the raw amino-acid sequence, 1806 residues long: Collagen alpha-1(XI) chain (1806 aa).

The first 35 residues, 1-35 (MEPWSSRWKTKRWLWDFTVTTLALTFLFQAREVRG), serve as a signal peptide directing secretion. The propeptide at 36-511 (AAPVDVLKAL…DGSKGPTISA (476 aa)) is N-terminal propeptide. 2 disulfides stabilise this stretch: C61–C243 and C182–C236. The Laminin G-like domain maps to 71–243 (DTAYRVSKQA…DYCEHYSPDC (173 aa)). Residues 230 to 419 (KAAYDYCEHY…DITETSINGH (190 aa)) are nonhelical region. The tract at residues 420 to 508 (GAYGEKGQKG…YGGDGSKGPT (89 aa)) is triple-helical region (interrupted). The segment at 439–508 (LVEGPPGPAG…YGGDGSKGPT (70 aa)) is disordered. In terms of domain architecture, Collagen-like 1 spans 442 to 490 (GPPGPAGPAGIMGPPGLQGPTGPPGDPGDRGPPGRPGLPGADGLPGPPG). Composition is skewed to low complexity over residues 449–461 (PAGIMGPPGLQGP) and 479–496 (LPGADGLPGPPGTMLMLP). Residues 509 to 511 (ISA) are short nonhelical segment. A telopeptide region spans residues 512-528 (QEAQAQAILQQARIALR). The tract at residues 528–1563 (RGPPGPMGLT…TRRHTEGMQA (1036 aa)) is disordered. The segment at 529-1542 (GPPGPMGLTG…PGSPGPPGEV (1014 aa)) is triple-helical region. Collagen-like domains are found at residues 532–586 (GPMG…GADG), 583–641 (GADG…EIGP), 616–674 (GERG…VDGP), and 643–699 (GLPG…PGPQ). Gly residues-rich tracts occupy residues 541–550 (GPVGGPGSSG) and 583–592 (GADGGRGMPG). K612 is subject to Allysine. Residues 641 to 662 (PRGLPGEAGPRGLLGPRGTPGA) show a composition bias toward low complexity. Residues 699–710 (QGLPGPQGPIGP) are compositionally biased toward pro residues. Low complexity predominate over residues 717-728 (QGKPGLAGLPGA). The segment covering 807 to 816 (RGEDGPEGPK) has biased composition (basic and acidic residues). Low complexity-rich tracts occupy residues 875 to 903 (KPGPRGQRGPTGPRGSRGARGPTGKPGPK), 918 to 927 (RGPQGPQGPV), 941 to 960 (KDGLPGHPGQRGETGFQGKT), 971 to 981 (PQGPTGETGPI), 1032 to 1041 (RGLPGAQGAP), and 1058 to 1074 (SPGERGSAGTAGPIGLP). The span at 1076–1085 (RPGPQGPPGP) shows a compositional bias: pro residues. Residues 1086–1110 (AGEKGAPGEKGPQGPAGRDGVQGPV) are compositionally biased toward low complexity. Positions 1162–1171 (GIAGGDGEPG) are enriched in gly residues. Composition is skewed to pro residues over residues 1218–1229 (MGPPGPPGPRGP) and 1343–1362 (QPGPPGPSGEAGPPGPPGKR). Composition is skewed to low complexity over residues 1385–1394 (AEGPPGKTGP) and 1419–1428 (QGLPGAAGQD). Collagen-like domains are found at residues 1393-1450 (GPVG…GSKG), 1429-1487 (GPPG…AKGD), and 1483-1541 (GAKG…PPGE). A compositionally biased stretch (pro residues) spans 1430 to 1439 (PPGPMGPPGL). K1452 carries the post-translational modification Allysine. The span at 1455–1464 (PGLIGLIGPP) shows a compositional bias: low complexity. Positions 1483–1492 (GAKGDGGIPG) are enriched in gly residues. 2 stretches are compositionally biased toward pro residues: residues 1493–1509 (PAGPLGPPGPPGLPGPQ) and 1530–1539 (PGPPGSPGPP). A nonhelical region (C-terminal) region spans residues 1543–1563 (IQPLPILSSKKTRRHTEGMQA). Residues 1564–1806 (DADDNILDYS…FEVGPVCFLG (243 aa)) constitute a propeptide, C-terminal propeptide. The 229-residue stretch at 1577 to 1805 (EEIFGSLNSL…GFEVGPVCFL (229 aa)) folds into the Fibrillar collagen NC1 domain. A disulfide bridge links C1607 with C1639. Ca(2+) is bound by residues D1625, N1627, Q1628, C1630, and D1633. Residue N1640 is glycosylated (N-linked (GlcNAc...) asparagine). 2 disulfide bridges follow: C1648/C1803 and C1714/C1757.

The protein belongs to the fibrillar collagen family. Trimers composed of three different chains: alpha 1(XI), alpha 2(XI), and alpha 3(XI). Alpha 3(XI) is a post-translational modification of alpha 1(II). Alpha 1(V) can also be found instead of alpha 3(XI)=1(II). Post-translationally, prolines at the third position of the tripeptide repeating unit (G-X-Y) are hydroxylated in some or all of the chains. N-glycosylated. As to expression, cartilage, placenta and some tumor or virally transformed cell lines. Isoforms using exon IIA or IIB are found in the cartilage while isoforms using only exon IIB are found in the tendon.

Its subcellular location is the secreted. The protein localises to the extracellular space. It localises to the extracellular matrix. In terms of biological role, may play an important role in fibrillogenesis by controlling lateral growth of collagen II fibrils. This chain is Collagen alpha-1(XI) chain (COL11A1), found in Homo sapiens (Human).